The following is a 593-amino-acid chain: NADH-quinone oxidoreductase subunit C/D (593 aa).

The segment at 1 to 184 (MTADNALYIP…DPYSLTLAKQ (184 aa)) is NADH dehydrogenase I subunit C. The segment at 208–593 (DYMFLNLGPN…IDFVMADVDR (386 aa)) is NADH dehydrogenase I subunit D.

In the N-terminal section; belongs to the complex I 30 kDa subunit family. This sequence in the C-terminal section; belongs to the complex I 49 kDa subunit family. As to quaternary structure, NDH-1 is composed of 13 different subunits. Subunits NuoB, CD, E, F, and G constitute the peripheral sector of the complex.

The protein localises to the cell inner membrane. The enzyme catalyses a quinone + NADH + 5 H(+)(in) = a quinol + NAD(+) + 4 H(+)(out). Its function is as follows. NDH-1 shuttles electrons from NADH, via FMN and iron-sulfur (Fe-S) centers, to quinones in the respiratory chain. The immediate electron acceptor for the enzyme in this species is believed to be ubiquinone. Couples the redox reaction to proton translocation (for every two electrons transferred, four hydrogen ions are translocated across the cytoplasmic membrane), and thus conserves the redox energy in a proton gradient. The sequence is that of NADH-quinone oxidoreductase subunit C/D from Pseudomonas syringae pv. syringae (strain B728a).